The chain runs to 121 residues: Large ribosomal subunit protein bL12 (121 aa).

It belongs to the bacterial ribosomal protein bL12 family. As to quaternary structure, homodimer. Part of the ribosomal stalk of the 50S ribosomal subunit. Forms a multimeric L10(L12)X complex, where L10 forms an elongated spine to which 2 to 4 L12 dimers bind in a sequential fashion. Binds GTP-bound translation factors.

Forms part of the ribosomal stalk which helps the ribosome interact with GTP-bound translation factors. Is thus essential for accurate translation. This chain is Large ribosomal subunit protein bL12, found in Streptococcus uberis (strain ATCC BAA-854 / 0140J).